The following is a 380-amino-acid chain: ATP phosphoribosyltransferase regulatory subunit (380 aa).

Belongs to the class-II aminoacyl-tRNA synthetase family. HisZ subfamily. Heteromultimer composed of HisG and HisZ subunits.

Its subcellular location is the cytoplasm. The protein operates within amino-acid biosynthesis; L-histidine biosynthesis; L-histidine from 5-phospho-alpha-D-ribose 1-diphosphate: step 1/9. In terms of biological role, required for the first step of histidine biosynthesis. May allow the feedback regulation of ATP phosphoribosyltransferase activity by histidine. The protein is ATP phosphoribosyltransferase regulatory subunit of Thermoanaerobacter sp. (strain X514).